A 56-amino-acid polypeptide reads, in one-letter code: Large ribosomal subunit protein bL33 (56 aa).

Positions Met1–Leu12 are enriched in basic and acidic residues. The tract at residues Met1–Lys28 is disordered. The segment covering Thr15–Thr25 has biased composition (polar residues).

The protein belongs to the bacterial ribosomal protein bL33 family.

In Cupriavidus necator (strain ATCC 17699 / DSM 428 / KCTC 22496 / NCIMB 10442 / H16 / Stanier 337) (Ralstonia eutropha), this protein is Large ribosomal subunit protein bL33.